The sequence spans 107 residues: Small ribosomal subunit protein uS10c (107 aa).

This sequence belongs to the universal ribosomal protein uS10 family. Part of the 30S ribosomal subunit.

It localises to the plastid. Its subcellular location is the chloroplast. Involved in the binding of tRNA to the ribosomes. In Thalassiosira pseudonana (Marine diatom), this protein is Small ribosomal subunit protein uS10c.